Reading from the N-terminus, the 305-residue chain is Sulfate adenylyltransferase subunit 2 (305 aa).

It belongs to the PAPS reductase family. CysD subfamily. Heterodimer composed of CysD, the smaller subunit, and CysN.

The enzyme catalyses sulfate + ATP + H(+) = adenosine 5'-phosphosulfate + diphosphate. The protein operates within sulfur metabolism; hydrogen sulfide biosynthesis; sulfite from sulfate: step 1/3. With CysN forms the ATP sulfurylase (ATPS) that catalyzes the adenylation of sulfate producing adenosine 5'-phosphosulfate (APS) and diphosphate, the first enzymatic step in sulfur assimilation pathway. APS synthesis involves the formation of a high-energy phosphoric-sulfuric acid anhydride bond driven by GTP hydrolysis by CysN coupled to ATP hydrolysis by CysD. The sequence is that of Sulfate adenylyltransferase subunit 2 from Pseudomonas fluorescens (strain Pf0-1).